Reading from the N-terminus, the 547-residue chain is uncharacterized protein (547 aa).

Residues 1 to 19 (MVRLNHAASYFMPIFCSTR) are Cytoplasmic-facing. Residues 20–40 (PHIVILSALFSISLFSLFYAS) traverse the membrane as a helical segment. The Vacuolar segment spans residues 41–64 (SELLLHQYDDPLMFKPNSQDYFRT). The chain crosses the membrane as a helical span at residues 65-85 (FLLGLFSPFLYYFLKTFLFNI). Over 86 to 89 (NQRF) the chain is Cytoplasmic. Residues 90 to 110 (LILNLIVDFPINDVFMLLILI) traverse the membrane as a helical segment. The Vacuolar portion of the chain corresponds to 111 to 139 (GLAYPQVQDHEGGTIKHKECSWHIIPRQA). The helical transmembrane segment at 140 to 160 (YIFGISWALGEFTICIIGNLF) threads the bilayer. The Cytoplasmic segment spans residues 161–340 (NYQEIADPNI…RFIAFSTAYQ (180 aa)). Ser-225 bears the Phosphoserine mark. The segment at 237–271 (PIKPLRSSSSTYGSIRQQPHENKKQLHVPDNSQDD) is disordered. Polar residues predominate over residues 242-253 (RSSSSTYGSIRQ). A helical transmembrane segment spans residues 341–361 (LVTGLLLMILVVGSNIMLTIG). Topologically, residues 362–394 (ESLILSMYFVYVRGHEGLFTPVVNYFGSRTISN) are vacuolar. A helical transmembrane segment spans residues 395–415 (FILCVIIPFISLNFLINTSIY). The Cytoplasmic segment spans residues 416–523 (LRRELDDWFN…NWRALARNDS (108 aa)). A helical membrane pass occupies residues 524-544 (FVLGVMVSWSLLVFVTGILST). Residues 545-547 (VYI) lie on the Vacuolar side of the membrane.

Its subcellular location is the vacuole membrane. This is an uncharacterized protein from Saccharomyces cerevisiae (strain ATCC 204508 / S288c) (Baker's yeast).